We begin with the raw amino-acid sequence, 161 residues long: Large-conductance mechanosensitive channel (161 aa).

Transmembrane regions (helical) follow at residues 14–34 (VVDMAVGIIVGGAFGSIVNTL) and 85–105 (GLFLNALVSFTIMAFSVFILV).

Belongs to the MscL family. Homopentamer.

The protein localises to the cell inner membrane. Channel that opens in response to stretch forces in the membrane lipid bilayer. May participate in the regulation of osmotic pressure changes within the cell. The polypeptide is Large-conductance mechanosensitive channel (Chlorobium luteolum (strain DSM 273 / BCRC 81028 / 2530) (Pelodictyon luteolum)).